The following is a 303-amino-acid chain: tRNA dimethylallyltransferase (303 aa).

16–23 (GPTASGKS) is an ATP binding site. Substrate is bound at residue 18-23 (TASGKS). The interaction with substrate tRNA stretch occupies residues 41-44 (DSMQ). The segment at 141–161 (AEALHGELSARDPETAGRVRP) is disordered. Residues 165-169 (QRIVR) are interaction with substrate tRNA.

This sequence belongs to the IPP transferase family. In terms of assembly, monomer. It depends on Mg(2+) as a cofactor.

The enzyme catalyses adenosine(37) in tRNA + dimethylallyl diphosphate = N(6)-dimethylallyladenosine(37) in tRNA + diphosphate. Its function is as follows. Catalyzes the transfer of a dimethylallyl group onto the adenine at position 37 in tRNAs that read codons beginning with uridine, leading to the formation of N6-(dimethylallyl)adenosine (i(6)A). In Rhizobium meliloti (strain 1021) (Ensifer meliloti), this protein is tRNA dimethylallyltransferase.